An 822-amino-acid polypeptide reads, in one-letter code: ATP-dependent zinc metalloprotease FtsH (822 aa).

At 1–76 (MEFNKLELLI…NQKEPGKARK (76 aa)) the chain is on the cytoplasmic side. The segment covering 44-54 (SLDQPSDAPSN) has biased composition (polar residues). The tract at residues 44-71 (SLDQPSDAPSNNKKRNLDQPDNPNQKEP) is disordered. A helical transmembrane segment spans residues 77–97 (IIWSFIIIILVLGVLALIILS). Topologically, residues 98 to 251 (GFSFSATSLN…QSMSLPTSYS (154 aa)) are extracellular. The chain crosses the membrane as a helical span at residues 252–272 (FYTAASLVLSILPFILLIGII). Topologically, residues 273-822 (YYSMRKMGQA…SKESSSDKKK (550 aa)) are cytoplasmic. 347–354 (GPPGTGKT) lines the ATP pocket. A Zn(2+)-binding site is contributed by His-569. The active site involves Glu-570. Zn(2+) is bound by residues His-573 and Asp-648. A compositionally biased stretch (basic and acidic residues) spans 758-794 (KKELEEKKKAEDLIRKAKKESEASSKEEKEMDVEKKV). Residues 758-822 (KKELEEKKKA…SKESSSDKKK (65 aa)) are disordered. Over residues 796 to 805 (KPSASSTEPT) the composition is skewed to low complexity. A compositionally biased stretch (basic and acidic residues) spans 812-822 (PSKESSSDKKK).

It in the central section; belongs to the AAA ATPase family. In the C-terminal section; belongs to the peptidase M41 family. As to quaternary structure, homohexamer. It depends on Zn(2+) as a cofactor.

Its subcellular location is the cell membrane. In terms of biological role, acts as a processive, ATP-dependent zinc metallopeptidase for both cytoplasmic and membrane proteins. Plays a role in the quality control of integral membrane proteins. The protein is ATP-dependent zinc metalloprotease FtsH of Malacoplasma penetrans (strain HF-2) (Mycoplasma penetrans).